We begin with the raw amino-acid sequence, 184 residues long: Sec-independent protein translocase protein TatB (184 aa).

The helical transmembrane segment at 1–21 threads the bilayer; it reads MFDIGFSELVLLFVVGLIVLG. Acidic residues predominate over residues 149-168; it reads AEEGEPMLEMGESDFSEDEQ. The tract at residues 149–184 is disordered; that stretch reads AEEGEPMLEMGESDFSEDEQATASSNETIENIKEKV.

This sequence belongs to the TatB family. The Tat system comprises two distinct complexes: a TatABC complex, containing multiple copies of TatA, TatB and TatC subunits, and a separate TatA complex, containing only TatA subunits. Substrates initially bind to the TatABC complex, which probably triggers association of the separate TatA complex to form the active translocon.

The protein localises to the cell inner membrane. Functionally, part of the twin-arginine translocation (Tat) system that transports large folded proteins containing a characteristic twin-arginine motif in their signal peptide across membranes. Together with TatC, TatB is part of a receptor directly interacting with Tat signal peptides. TatB may form an oligomeric binding site that transiently accommodates folded Tat precursor proteins before their translocation. This is Sec-independent protein translocase protein TatB from Histophilus somni (strain 129Pt) (Haemophilus somnus).